The following is a 481-amino-acid chain: Sialic acid-binding Ig-like lectin 16 (481 aa).

The first 16 residues, M1–L16, serve as a signal peptide directing secretion. The Extracellular portion of the chain corresponds to N17 to G434. The region spanning D19–E122 is the Ig-like V-type domain. 4 disulfide bridges follow: C37–C174, C42–C102, C165–C216, and C259–C306. N-linked (GlcNAc...) asparagine glycosylation is found at N43 and N78. R120 contributes to the N-acetylneuraminate binding site. Ig-like C2-type domains follow at residues P147–R232, L238–S322, and P327–S424. N338 and N347 each carry an N-linked (GlcNAc...) asparagine glycan. A disulfide bond links C363 and C408. A helical membrane pass occupies residues V435–I455. Residues L456–D481 are Cytoplasmic-facing.

This sequence belongs to the immunoglobulin superfamily. SIGLEC (sialic acid binding Ig-like lectin) family. As to expression, expressed in bone marrow, fetal brain, fetal liver, lung and salivary gland. Detected in brain, macrophage, cancerous esophagus and lung at protein level.

It localises to the membrane. In terms of biological role, putative adhesion molecule that mediates sialic-acid dependent binding to cells. This chain is Sialic acid-binding Ig-like lectin 16 (SIGLEC16), found in Homo sapiens (Human).